Reading from the N-terminus, the 1211-residue chain is RNA helicase Mov10l1 (1211 aa).

Disordered stretches follow at residues 340–385 (KENS…GENG) and 674–710 (WNHA…RVGD). 2 stretches are compositionally biased toward polar residues: residues 345 to 372 (DENI…NNRG) and 674 to 688 (WNHA…QSTS). A compositionally biased stretch (basic and acidic residues) spans 694–710 (TMTDQAEHGTEERRVGD). 770-777 (GPPGTGKT) contacts ATP. Residues 886–889 (DEAG) carry the DEAG box motif. The segment at 1192–1211 (DPSYPVVPESTGPEKHQEPS) is disordered.

The protein belongs to the DNA2/NAM7 helicase family. SDE3 subfamily. As to quaternary structure, interacts with PIWIL1. Interacts with PIWIL2. Interacts with PIWIL4. Interacts with HSPA2. Interacts with PLD6. Specifically expressed in testis.

It localises to the cytoplasm. The enzyme catalyses ATP + H2O = ADP + phosphate + H(+). ATP-dependent RNA helicase required during spermatogenesis to repress transposable elements and prevent their mobilization, which is essential for germline integrity. Acts via the piRNA metabolic process, which mediates the repression of transposable elements during meiosis by forming complexes composed of piRNAs and Piwi proteins and governs the methylation and subsequent repression of transposons. Involved in the primary piRNA metabolic process. Specifically binds to piRNA precursors and promotes the generation of intermediate piRNA processing fragments that are subsequently loaded to Piwi proteins. Acts via its ATP-dependent RNA helicase activity: displays 5'-3' RNA unwinding activity and probably mediates unwinding and funneling of single-stranded piRNA precursor transcripts to the endonuclease that catalyzes the first cleavage step of piRNA processing to generate piRNA intermediate fragments that are subsequently loaded to Piwi proteins. In Homo sapiens (Human), this protein is RNA helicase Mov10l1.